A 730-amino-acid chain; its full sequence is MSEVSRDENMRGTSDGIGSQAQFLESELDTEFVVETFIEAIKDDDLKVVKEVVESGAIDINKDCIDELPGLHWACIKNRFSIAKFLIRRGANVNQTAGPERATALHWAARYGHVYIVDLLLKHGANPTLIDGQGLNILHFSVYSSNIMLVVYVLYFVVSNNNNVDIDSRDYNNRTPLLWAAYQGDFLTVELLLKFGATVALTDNRGFNALHCALVGGDQRAICDLILSGANFYERNNQKQDCFDLAKGMGTKALFEQALQHHGYDKLGNQKDKIFKKNSHSQLMIFLSPFALMIYTYLISLILSPPLAIALSLLVIVVTVNSLKKFVLPSLTRKNIYKVSLVRTPFFSGLFMSTFSFLLFIWVKKLYPYSVFDYTAKDAQLLITSLFTFVLFLKLVRSDPGCLKMDDSTTPVRETINQLIQIGKYDRNNFCVETLERKPLRSKYSLFSGALVARFNHYCPWVYNDIGLKNHKLFMFFAFSVQYEMFLFMWLCLEYFKKTNHIYEQVEEYAKCTFLKNETLCKGSNYDPSTFFLFIWISMNFVWLGGMLIVQCFQIFKGITSPELYALIKEERKAEALNLIPFENPIFSIPNGKNRDTVPEDPNATTVTHTISIDSLEPRNRRHAILDACFSMVGLNQWVVTFKEMLGISNLLRGNSQPRHNHSLLRNFLVANHWKTNLTDFWLNSDVTAPLWQRFFYSSDTSKAMLGGVEVDYYQLYELPAREGEPISSN.

6 ANK repeats span residues 32-62, 66-95, 100-129, 133-166, 172-201, and 205-234; these read FVVETFIEAIKDDDLKVVKEVVESGAIDINK, DELPGLHWACIKNRFSIAKFLIRRGANVNQ, ERATALHWAARYGHVYIVDLLLKHGANPTL, QGLNILHFSVYSSNIMLVVYVLYFVVSNNNNVDI, NNRTPLLWAAYQGDFLTVELLLKFGATVAL, and RGFNALHCALVGGDQRAICDLILSGANFYE. Transmembrane regions (helical) follow at residues 283-303, 309-328, 344-364, and 376-396; these read LMIFLSPFALMIYTYLISLIL, IALSLLVIVVTVNSLKKFVL, TPFFSGLFMSTFSFLLFIWVK, and AKDAQLLITSLFTFVLFLKLV. Positions 429–479 constitute a DHHC domain; the sequence is NFCVETLERKPLRSKYSLFSGALVARFNHYCPWVYNDIGLKNHKLFMFFAF. The active-site S-palmitoyl cysteine intermediate is the Cys459. 2 consecutive transmembrane segments (helical) span residues 473-493 and 530-550; these read LFMFFAFSVQYEMFLFMWLCL and TFFLFIWISMNFVWLGGMLIV.

It belongs to the DHHC palmitoyltransferase family. AKR/ZDHHC17 subfamily.

It localises to the membrane. The catalysed reaction is L-cysteinyl-[protein] + hexadecanoyl-CoA = S-hexadecanoyl-L-cysteinyl-[protein] + CoA. The polypeptide is Probable palmitoyltransferase AKR2 (AKR2) (Saccharomyces uvarum (strain ATCC 76518 / CBS 7001 / CLIB 283 / NBRC 10550 / MCYC 623 / NCYC 2669 / NRRL Y-11845) (Yeast)).